Here is a 216-residue protein sequence, read N- to C-terminus: Elongation factor Ts (216 aa).

The tract at residues 81–84 (TDFV) is involved in Mg(2+) ion dislocation from EF-Tu.

This sequence belongs to the EF-Ts family.

The protein localises to the cytoplasm. Its function is as follows. Associates with the EF-Tu.GDP complex and induces the exchange of GDP to GTP. It remains bound to the aminoacyl-tRNA.EF-Tu.GTP complex up to the GTP hydrolysis stage on the ribosome. The polypeptide is Elongation factor Ts (Geobacter sp. (strain M21)).